The following is a 408-amino-acid chain: Aspartokinase 2 (408 aa).

Position 7–10 (7–10) interacts with ATP; the sequence is KFGG. 25 to 30 is a binding site for substrate; sequence RAIAEK. An ATP-binding site is contributed by serine 41. Substrate contacts are provided by residues 47-49, glutamate 74, 125-126, 150-153, and serine 153; these read TDE, LE, and RGGS. Residues 173 to 174 and 179 to 184 contribute to the ATP site; these read TD and FTTDPR. 2 ACT domains span residues 264–337 and 343–408; these read VTIY…TESK and IVGS…PSAV. Substrate contacts are provided by residues 289–291, glutamine 295, 354–355, 368–369, and 375–376; these read NVD, VA, LI, and SE.

It belongs to the aspartokinase family. Tetramer consisting of 2 isoforms Alpha (catalytic and regulation) and of a homodimer of 2 isoforms Beta (regulation).

It carries out the reaction L-aspartate + ATP = 4-phospho-L-aspartate + ADP. It participates in amino-acid biosynthesis; L-lysine biosynthesis via DAP pathway; (S)-tetrahydrodipicolinate from L-aspartate: step 1/4. The protein operates within amino-acid biosynthesis; L-methionine biosynthesis via de novo pathway; L-homoserine from L-aspartate: step 1/3. Its pathway is amino-acid biosynthesis; L-threonine biosynthesis; L-threonine from L-aspartate: step 1/5. Its activity is regulated as follows. Lysine-sensitive. Regulated by degradation in response to starvation of cells for various nutrients. Ammonium starvation induced the fastest aspartokinase II decline, followed by amino acid starvation and glucose limitation. Functionally, catalyzes the phosphorylation of the beta-carboxyl group of aspartic acid with ATP to yield 4-phospho-L-aspartate, which is involved in the branched biosynthetic pathway leading to the biosynthesis of amino acids threonine, isoleucine and methionine. This is Aspartokinase 2 (lysC) from Bacillus subtilis (strain 168).